The primary structure comprises 559 residues: 2-succinyl-5-enolpyruvyl-6-hydroxy-3-cyclohexene-1-carboxylate synthase (559 aa).

This sequence belongs to the TPP enzyme family. MenD subfamily. As to quaternary structure, homodimer. Mg(2+) is required as a cofactor. Mn(2+) serves as cofactor. Requires thiamine diphosphate as cofactor.

It carries out the reaction isochorismate + 2-oxoglutarate + H(+) = 5-enolpyruvoyl-6-hydroxy-2-succinyl-cyclohex-3-ene-1-carboxylate + CO2. Its pathway is quinol/quinone metabolism; 1,4-dihydroxy-2-naphthoate biosynthesis; 1,4-dihydroxy-2-naphthoate from chorismate: step 2/7. It functions in the pathway quinol/quinone metabolism; menaquinone biosynthesis. Functionally, catalyzes the thiamine diphosphate-dependent decarboxylation of 2-oxoglutarate and the subsequent addition of the resulting succinic semialdehyde-thiamine pyrophosphate anion to isochorismate to yield 2-succinyl-5-enolpyruvyl-6-hydroxy-3-cyclohexene-1-carboxylate (SEPHCHC). The chain is 2-succinyl-5-enolpyruvyl-6-hydroxy-3-cyclohexene-1-carboxylate synthase from Cytophaga hutchinsonii (strain ATCC 33406 / DSM 1761 / CIP 103989 / NBRC 15051 / NCIMB 9469 / D465).